The following is a 90-amino-acid chain: Progonadoliberin-3 (90 aa).

A signal peptide spans 1-23 (MEANSRVMVRVLLLALVVQVTLS). Q24 is modified (pyrrolidone carboxylic acid). G33 carries the glycine amide modification. Positions 56–90 (LPEEASAQTQERLRPYNVINDDSSHFDRKKRSPNK) are disordered.

Belongs to the GnRH family.

Its subcellular location is the secreted. Its function is as follows. Stimulates the secretion of gonadotropins. In Dicentrarchus labrax (European seabass), this protein is Progonadoliberin-3 (gnrh3).